The following is a 415-amino-acid chain: Lipoyl synthase, mitochondrial (415 aa).

A mitochondrion-targeting transit peptide spans 1–33 (MAASTSHLRSLCSSTRSLSRSGVIVTPIACRGY). 7 residues coordinate [4Fe-4S] cluster: Cys-132, Cys-137, Cys-143, Cys-163, Cys-167, Cys-170, and Ser-378. Positions 148–367 (DKSSATATIM…RQRALEMGFL (220 aa)) constitute a Radical SAM core domain.

It belongs to the radical SAM superfamily. Lipoyl synthase family. It depends on [4Fe-4S] cluster as a cofactor.

Its subcellular location is the mitochondrion. The enzyme catalyses [[Fe-S] cluster scaffold protein carrying a second [4Fe-4S](2+) cluster] + N(6)-octanoyl-L-lysyl-[protein] + 2 oxidized [2Fe-2S]-[ferredoxin] + 2 S-adenosyl-L-methionine + 4 H(+) = [[Fe-S] cluster scaffold protein] + N(6)-[(R)-dihydrolipoyl]-L-lysyl-[protein] + 4 Fe(3+) + 2 hydrogen sulfide + 2 5'-deoxyadenosine + 2 L-methionine + 2 reduced [2Fe-2S]-[ferredoxin]. It participates in protein modification; protein lipoylation via endogenous pathway; protein N(6)-(lipoyl)lysine from octanoyl-[acyl-carrier-protein]: step 2/2. Catalyzes the radical-mediated insertion of two sulfur atoms into the C-6 and C-8 positions of the octanoyl moiety bound to the lipoyl domains of lipoate-dependent enzymes, thereby converting the octanoylated domains into lipoylated derivatives. The polypeptide is Lipoyl synthase, mitochondrial (Aspergillus clavatus (strain ATCC 1007 / CBS 513.65 / DSM 816 / NCTC 3887 / NRRL 1 / QM 1276 / 107)).